Reading from the N-terminus, the 982-residue chain is Presequence protease, mitochondrial (982 aa).

Residues 1-7 constitute a mitochondrion transit peptide; sequence MFQIRNY. Position 84 (H84) interacts with Zn(2+). The active-site Proton acceptor is E87. H88 is a binding site for Zn(2+). E160 is a catalytic residue. E185 provides a ligand contact to Zn(2+).

The protein belongs to the peptidase M16 family. PreP subfamily. As to quaternary structure, monomer and homodimer; homodimerization is induced by binding of the substrate. It depends on Zn(2+) as a cofactor.

The protein localises to the mitochondrion intermembrane space. Its subcellular location is the mitochondrion matrix. Degrades mitochondrial transit peptides after their cleavage in the intermembrane space or in the matrix, and presequence peptides; clearance of these peptides is required to keep the presequence processing machinery running. Preferentially cleaves the N-terminal side of paired basic amino acid residues. Also degrades other unstructured peptides. May function as an ATP-dependent peptidase as opposed to a metalloendopeptidase. This chain is Presequence protease, mitochondrial (CYM1), found in Kluyveromyces lactis (strain ATCC 8585 / CBS 2359 / DSM 70799 / NBRC 1267 / NRRL Y-1140 / WM37) (Yeast).